Reading from the N-terminus, the 373-residue chain is Queuine tRNA-ribosyltransferase (373 aa).

Residue aspartate 89 is the Proton acceptor of the active site. Residues 89 to 93, aspartate 143, glutamine 187, and glycine 214 each bind substrate; that span reads DSGGF. Residues 245 to 251 form an RNA binding region; it reads GVGKPED. Catalysis depends on aspartate 264, which acts as the Nucleophile. Positions 269 to 273 are RNA binding; important for wobble base 34 recognition; that stretch reads TRNAR. Zn(2+)-binding residues include cysteine 302, cysteine 304, cysteine 307, and histidine 333.

It belongs to the queuine tRNA-ribosyltransferase family. In terms of assembly, homodimer. Within each dimer, one monomer is responsible for RNA recognition and catalysis, while the other monomer binds to the replacement base PreQ1. Zn(2+) is required as a cofactor.

The catalysed reaction is 7-aminomethyl-7-carbaguanine + guanosine(34) in tRNA = 7-aminomethyl-7-carbaguanosine(34) in tRNA + guanine. It functions in the pathway tRNA modification; tRNA-queuosine biosynthesis. Functionally, catalyzes the base-exchange of a guanine (G) residue with the queuine precursor 7-aminomethyl-7-deazaguanine (PreQ1) at position 34 (anticodon wobble position) in tRNAs with GU(N) anticodons (tRNA-Asp, -Asn, -His and -Tyr). Catalysis occurs through a double-displacement mechanism. The nucleophile active site attacks the C1' of nucleotide 34 to detach the guanine base from the RNA, forming a covalent enzyme-RNA intermediate. The proton acceptor active site deprotonates the incoming PreQ1, allowing a nucleophilic attack on the C1' of the ribose to form the product. After dissociation, two additional enzymatic reactions on the tRNA convert PreQ1 to queuine (Q), resulting in the hypermodified nucleoside queuosine (7-(((4,5-cis-dihydroxy-2-cyclopenten-1-yl)amino)methyl)-7-deazaguanosine). This is Queuine tRNA-ribosyltransferase from Tolumonas auensis (strain DSM 9187 / NBRC 110442 / TA 4).